The primary structure comprises 212 residues: Adenylate kinase (212 aa).

10–15 (GAGKGT) serves as a coordination point for ATP. The segment at 30 to 59 (STGDMFRAAMVNQTEMGVLAKSYIDKGELV) is NMP. AMP is bound by residues threonine 31, arginine 36, 57 to 59 (ELV), 86 to 89 (GYPR), and glutamine 93. The interval 127-159 (GRIIHRVTGETFHKVFNPPVDYKEEDYYQREDD) is LID. Residues arginine 128 and 137–138 (TF) contribute to the ATP site. AMP contacts are provided by arginine 156 and arginine 167. Glutamine 195 contacts ATP.

This sequence belongs to the adenylate kinase family. In terms of assembly, monomer.

It localises to the cytoplasm. The catalysed reaction is AMP + ATP = 2 ADP. The protein operates within purine metabolism; AMP biosynthesis via salvage pathway; AMP from ADP: step 1/1. In terms of biological role, catalyzes the reversible transfer of the terminal phosphate group between ATP and AMP. Plays an important role in cellular energy homeostasis and in adenine nucleotide metabolism. The protein is Adenylate kinase of Streptococcus pneumoniae (strain 70585).